Consider the following 546-residue polypeptide: Chaperonin GroEL 1 (546 aa).

ATP is bound by residues threonine 30–proline 33, lysine 51, aspartate 87–threonine 91, glycine 415, and aspartate 495. A disordered region spans residues aspartate 527–phenylalanine 546. The span at glycine 535–phenylalanine 546 shows a compositional bias: gly residues.

This sequence belongs to the chaperonin (HSP60) family. Forms a cylinder of 14 subunits composed of two heptameric rings stacked back-to-back. Interacts with the co-chaperonin GroES.

The protein localises to the cytoplasm. The catalysed reaction is ATP + H2O + a folded polypeptide = ADP + phosphate + an unfolded polypeptide.. Together with its co-chaperonin GroES, plays an essential role in assisting protein folding. The GroEL-GroES system forms a nano-cage that allows encapsulation of the non-native substrate proteins and provides a physical environment optimized to promote and accelerate protein folding. This Burkholderia lata (strain ATCC 17760 / DSM 23089 / LMG 22485 / NCIMB 9086 / R18194 / 383) protein is Chaperonin GroEL 1.